A 122-amino-acid polypeptide reads, in one-letter code: UPF0382 membrane protein SE_0353 (122 aa).

4 helical membrane passes run 3–23 (VFII…AFGA), 46–66 (MYHG…SINV), 69–89 (AGWL…FLAL), and 98–118 (ITPI…IATL).

This sequence belongs to the UPF0382 family.

Its subcellular location is the cell membrane. In Staphylococcus epidermidis (strain ATCC 12228 / FDA PCI 1200), this protein is UPF0382 membrane protein SE_0353.